A 602-amino-acid chain; its full sequence is 4-hydroxy-3-methylbut-2-en-1-yl diphosphate synthase (flavodoxin) (602 aa).

Positions 508, 511, 543, and 550 each coordinate [4Fe-4S] cluster.

It belongs to the IspG family. It depends on [4Fe-4S] cluster as a cofactor.

It carries out the reaction (2E)-4-hydroxy-3-methylbut-2-enyl diphosphate + oxidized [flavodoxin] + H2O + 2 H(+) = 2-C-methyl-D-erythritol 2,4-cyclic diphosphate + reduced [flavodoxin]. It functions in the pathway isoprenoid biosynthesis; isopentenyl diphosphate biosynthesis via DXP pathway; isopentenyl diphosphate from 1-deoxy-D-xylulose 5-phosphate: step 5/6. In terms of biological role, converts 2C-methyl-D-erythritol 2,4-cyclodiphosphate (ME-2,4cPP) into 1-hydroxy-2-methyl-2-(E)-butenyl 4-diphosphate. In Chlamydia trachomatis serovar L2 (strain ATCC VR-902B / DSM 19102 / 434/Bu), this protein is 4-hydroxy-3-methylbut-2-en-1-yl diphosphate synthase (flavodoxin).